The following is a 647-amino-acid chain: Threonine--tRNA ligase (647 aa).

Positions 1 to 61 (MIKITFPDGA…EEDGSIEIVT (61 aa)) constitute a TGS domain. The segment at 240–538 (DHRKLGKELD…LIETYKGAFP (299 aa)) is catalytic. Residues Cys-334, His-385, and His-515 each coordinate Zn(2+).

It belongs to the class-II aminoacyl-tRNA synthetase family. Homodimer. The cofactor is Zn(2+).

The protein localises to the cytoplasm. It catalyses the reaction tRNA(Thr) + L-threonine + ATP = L-threonyl-tRNA(Thr) + AMP + diphosphate + H(+). Its function is as follows. Catalyzes the attachment of threonine to tRNA(Thr) in a two-step reaction: L-threonine is first activated by ATP to form Thr-AMP and then transferred to the acceptor end of tRNA(Thr). Also edits incorrectly charged L-seryl-tRNA(Thr). This chain is Threonine--tRNA ligase, found in Streptococcus pyogenes serotype M1.